A 173-amino-acid polypeptide reads, in one-letter code: Small ribosomal subunit protein mS25 (173 aa).

Belongs to the mitochondrion-specific ribosomal protein mS25 family. Component of the mitochondrial small ribosomal subunit (mt-SSU). Mature mammalian 55S mitochondrial ribosomes consist of a small (28S) and a large (39S) subunit. The 28S small subunit contains a 12S ribosomal RNA (12S mt-rRNA) and 30 different proteins. The 39S large subunit contains a 16S rRNA (16S mt-rRNA), a copy of mitochondrial valine transfer RNA (mt-tRNA(Val)), which plays an integral structural role, and 52 different proteins.

It localises to the mitochondrion. The chain is Small ribosomal subunit protein mS25 (MRPS25) from Homo sapiens (Human).